The sequence spans 426 residues: Bone morphogenetic protein 7 (426 aa).

An N-terminal signal peptide occupies residues Met-1–Ser-22. A propeptide spanning residues Ser-23 to Arg-282 is cleaved from the precursor. N-linked (GlcNAc...) asparagine glycosylation is found at Asn-177, Asn-307, and Asn-367. Cystine bridges form between Cys-325–Cys-391, Cys-354–Cys-423, and Cys-358–Cys-425.

The protein belongs to the TGF-beta family. As to quaternary structure, homodimer; disulfide-linked. Interacts with twsg1.

It is found in the secreted. Functionally, growth factor of the TGF-beta superfamily that plays important role in various biological processes, including embryogenesis, hematopoiesis, neurogenesis and skeletal morphogenesis. Initiates the canonical BMP signaling cascade by associating with type I receptor ACVR1 and type II receptor ACVR2A. Once all three components are bound together in a complex at the cell surface, ACVR2A phosphorylates and activates ACVR1. In turn, ACVR1 propagates signal by phosphorylating SMAD1/5/8 that travel to the nucleus and act as activators and repressors of transcription of target genes. This is Bone morphogenetic protein 7 (bmp7) from Xenopus laevis (African clawed frog).